An 87-amino-acid polypeptide reads, in one-letter code: Small ribosomal subunit protein bS20 (87 aa).

Positions 1 to 15 (MANHKSAMKRIKQTA) are enriched in basic residues. The segment at 1–27 (MANHKSAMKRIKQTAKRTERNKHERST) is disordered. The span at 16 to 27 (KRTERNKHERST) shows a compositional bias: basic and acidic residues.

Belongs to the bacterial ribosomal protein bS20 family.

Its function is as follows. Binds directly to 16S ribosomal RNA. The chain is Small ribosomal subunit protein bS20 from Citrifermentans bemidjiense (strain ATCC BAA-1014 / DSM 16622 / JCM 12645 / Bem) (Geobacter bemidjiensis).